Here is a 41-residue protein sequence, read N- to C-terminus: Photosystem II reaction center protein Y (41 aa).

Residues 7 to 25 traverse the membrane as a helical segment; sequence VAIVLAPIAVAAGWAAFNI.

The protein belongs to the PsbY family. PSII is composed of 1 copy each of membrane proteins PsbA, PsbB, PsbC, PsbD, PsbE, PsbF, PsbH, PsbI, PsbJ, PsbK, PsbL, PsbM, PsbT, PsbX, PsbY, PsbZ, Psb30/Ycf12, peripheral proteins PsbO, CyanoQ (PsbQ), PsbU, PsbV and a large number of cofactors. It forms dimeric complexes.

It is found in the cellular thylakoid membrane. Loosely associated component of the core of photosystem II (PSII), it is not always seen in crystals. PSII is a light-driven water plastoquinone oxidoreductase, using light energy to abstract electrons from H(2)O, generating a proton gradient subsequently used for ATP formation. This chain is Photosystem II reaction center protein Y, found in Nostoc sp. (strain PCC 7120 / SAG 25.82 / UTEX 2576).